The chain runs to 121 residues: Large ribosomal subunit protein bL12 (121 aa).

The protein belongs to the bacterial ribosomal protein bL12 family. In terms of assembly, homodimer. Part of the ribosomal stalk of the 50S ribosomal subunit. Forms a multimeric L10(L12)X complex, where L10 forms an elongated spine to which 2 to 4 L12 dimers bind in a sequential fashion. Binds GTP-bound translation factors.

Forms part of the ribosomal stalk which helps the ribosome interact with GTP-bound translation factors. Is thus essential for accurate translation. This Erwinia tasmaniensis (strain DSM 17950 / CFBP 7177 / CIP 109463 / NCPPB 4357 / Et1/99) protein is Large ribosomal subunit protein bL12.